Here is a 126-residue protein sequence, read N- to C-terminus: Holo-[acyl-carrier-protein] synthase (126 aa).

Residues Asp-9 and Glu-58 each coordinate Mg(2+).

This sequence belongs to the P-Pant transferase superfamily. AcpS family. Mg(2+) is required as a cofactor.

Its subcellular location is the cytoplasm. It catalyses the reaction apo-[ACP] + CoA = holo-[ACP] + adenosine 3',5'-bisphosphate + H(+). Its function is as follows. Transfers the 4'-phosphopantetheine moiety from coenzyme A to a Ser of acyl-carrier-protein. The polypeptide is Holo-[acyl-carrier-protein] synthase (Sodalis glossinidius (strain morsitans)).